We begin with the raw amino-acid sequence, 337 residues long: Phytanoyl-CoA dioxygenase, peroxisomal (337 aa).

The N-terminal 30 residues, 1-30 (MDRNRASARLTVLLRHLGCRSAGTIIAHHT), are a transit peptide targeting the peroxisome. N6-succinyllysine occurs at positions 59 and 108. Residues Lys120, Met157, 175-177 (HQD), and Trp193 each bind 2-oxoglutarate. Fe cation is bound by residues His175 and Asp177. Lys252 is subject to N6-succinyllysine. His264 contributes to the Fe cation binding site. 2-oxoglutarate contacts are provided by Ser266 and Arg275.

It belongs to the PhyH family. Interacts with FKBP52 and PHYHIP. Fe cation serves as cofactor. It depends on L-ascorbate as a cofactor. The cofactor is ATP. Mg(2+) is required as a cofactor.

It localises to the peroxisome. It catalyses the reaction phytanoyl-CoA + 2-oxoglutarate + O2 = 2-hydroxyphytanoyl-CoA + succinate + CO2. The enzyme catalyses 3-methylhexadecanoyl-CoA + 2-oxoglutarate + O2 = 2-hydroxy-3-methylhexadecanoyl-CoA + succinate + CO2. The catalysed reaction is hexadecanoyl-CoA + 2-oxoglutarate + O2 = 2-hydroxyhexadecanoyl-CoA + succinate + CO2. It carries out the reaction octanoyl-CoA + 2-oxoglutarate + O2 = 2-hydroxyoctanoyl-CoA + succinate + CO2. It catalyses the reaction decanoyl-CoA + 2-oxoglutarate + O2 = 2-hydroxydecanoyl-CoA + succinate + CO2. The enzyme catalyses 3-methylbutanoyl-CoA + 2-oxoglutarate + O2 = 2-hydroxy-3-methylbutanoyl-CoA + succinate + CO2. The catalysed reaction is heptadecanoyl-CoA + 2-oxoglutarate + O2 = 2-hydroxyheptadecanoyl-CoA + succinate + CO2. It carries out the reaction eicosanoyl-CoA + 2-oxoglutarate + O2 = 2-hydroxyeicosanoyl-CoA + succinate + CO2. It catalyses the reaction octadecanoyl-CoA + 2-oxoglutarate + O2 = 2-hydroxyoctadecanoyl-CoA + succinate + CO2. The enzyme catalyses dodecanoyl-CoA + 2-oxoglutarate + O2 = 2-hydroxydodecanoyl-CoA + succinate + CO2. The catalysed reaction is tetradecanoyl-CoA + 2-oxoglutarate + O2 = 2-hydroxytetradecanoyl-CoA + succinate + CO2. It carries out the reaction hexanoyl-CoA + 2-oxoglutarate + O2 = 2-hydroxyhexanoyl-CoA + succinate + CO2. It catalyses the reaction butanoyl-CoA + 2-oxoglutarate + O2 = 2-hydroxybutanoyl-CoA + succinate + CO2. The enzyme catalyses 3-methylnonanoyl-CoA + 2-oxoglutarate + O2 = 2-hydroxy-3-methylnonanoyl-CoA + succinate + CO2. The catalysed reaction is 3-methylundecanoyl-CoA + 2-oxoglutarate + O2 = 2-hydroxy-3-methylundecanoyl-CoA + succinate + CO2. It carries out the reaction 3-methyldodecanoyl-CoA + 2-oxoglutarate + O2 = 2-hydroxy-3-methyldodecanoyl-CoA + succinate + CO2. Its pathway is lipid metabolism; fatty acid metabolism. In terms of biological role, catalyzes the 2-hydroxylation of not only racemic phytanoyl-CoA and the isomers of 3-methylhexadecanoyl-CoA, but also a variety of other mono- branched 3-methylacyl-CoA esters (with a chain length of at least seven carbon atoms) and straight-chain acyl-CoA esters (with a chain length longer than four carbon atoms). Does not hydroxylate long and very long straight chain acyl-CoAs or 2-methyl-and 4-methyl-branched acyl-CoAs. The protein is Phytanoyl-CoA dioxygenase, peroxisomal (PHYH) of Bos taurus (Bovine).